Here is a 270-residue protein sequence, read N- to C-terminus: NADPH-dependent aldehyde reductase-like protein, chloroplastic (270 aa).

A chloroplast-targeting transit peptide spans M1–D53. R26–K50 provides a ligand contact to NADP(+). Residue S165 participates in substrate binding. Y178 (proton acceptor) is an active-site residue.

Belongs to the short-chain dehydrogenases/reductases (SDR) family.

The protein localises to the plastid. It localises to the chloroplast. Functionally, aldehyde reductase that catalyzes the reduction of the aldehyde carbonyl groups on saturated and alpha,beta-unsaturated aldehydes with more than 5 carbons. This is NADPH-dependent aldehyde reductase-like protein, chloroplastic from Arabidopsis thaliana (Mouse-ear cress).